The sequence spans 412 residues: 4-hydroxyphenylpyruvate dioxygenase (412 aa).

2 VOC domains span residues G31–R179 and R209–K369. Fe cation is bound by residues H212, H295, and E380.

Belongs to the 4HPPD family. Requires Fe cation as cofactor.

The catalysed reaction is 3-(4-hydroxyphenyl)pyruvate + O2 = homogentisate + CO2. Its pathway is amino-acid degradation; L-phenylalanine degradation; acetoacetate and fumarate from L-phenylalanine: step 3/6. The polypeptide is 4-hydroxyphenylpyruvate dioxygenase (Neurospora crassa (strain ATCC 24698 / 74-OR23-1A / CBS 708.71 / DSM 1257 / FGSC 987)).